We begin with the raw amino-acid sequence, 473 residues long: 23S rRNA (uracil(1939)-C(5))-methyltransferase RlmD (473 aa).

The disordered stretch occupies residues 6–27 (KPSKGKNKSNVKGRVRGAGSGE). The span at 8 to 20 (SKGKNKSNVKGRV) shows a compositional bias: basic residues. The TRAM domain occupies 42 to 99 (DDINAANEAVTIDGMDWQGQGVARGDTLYFVDGALPGETVEIKALSSNKQIVNAKVTK). Positions 112, 118, 121, and 199 each coordinate [4Fe-4S] cluster. Residues Q304, F333, N338, E354, D381, and D402 each coordinate S-adenosyl-L-methionine. C428 serves as the catalytic Nucleophile.

It belongs to the class I-like SAM-binding methyltransferase superfamily. RNA M5U methyltransferase family. RlmD subfamily.

The enzyme catalyses uridine(1939) in 23S rRNA + S-adenosyl-L-methionine = 5-methyluridine(1939) in 23S rRNA + S-adenosyl-L-homocysteine + H(+). In terms of biological role, catalyzes the formation of 5-methyl-uridine at position 1939 (m5U1939) in 23S rRNA. The sequence is that of 23S rRNA (uracil(1939)-C(5))-methyltransferase RlmD from Alteromonas naphthalenivorans.